Reading from the N-terminus, the 470-residue chain is A-type ATP synthase subunit B (470 aa).

It belongs to the ATPase alpha/beta chains family. Has multiple subunits with at least A(3), B(3), C, D, E, F, H, I and proteolipid K(x).

It is found in the cell membrane. In terms of biological role, component of the A-type ATP synthase that produces ATP from ADP in the presence of a proton gradient across the membrane. The B chain is a regulatory subunit. The protein is A-type ATP synthase subunit B of Haloarcula marismortui (strain ATCC 43049 / DSM 3752 / JCM 8966 / VKM B-1809) (Halobacterium marismortui).